The primary structure comprises 570 residues: NADPH oxidase 2 (570 aa).

The Cytoplasmic portion of the chain corresponds to 2–9 (GNWAVNEG). Residues 10–36 (LSIFVILVWLGLNVFLFVWYYRVYDIP) form a helical membrane-spanning segment. The Extracellular segment spans residues 37 to 46 (PKFFYTRKLL). A helical transmembrane segment spans residues 47 to 72 (GSALALARAPAACLNFNCMLILLPVC). Residues 54–286 (RAPAACLNFN…MFLYLCERLV (233 aa)) form the Ferric oxidoreductase domain. Topologically, residues 73-95 (RNLLSFLRGSSACCSTRVRRQLD) are cytoplasmic. Residues 96–130 (RNLTFHKMVAWMIALHSAIHTIAHLFNVEWCVNAR) traverse the membrane as a helical segment. Residues His101 and His115 each coordinate heme b. The Extracellular portion of the chain corresponds to 131–163 (VNNSDPYSVALSELGDRQNESYLNFARKRIKNP). Asn132 and Asn149 each carry an N-linked (GlcNAc...) asparagine glycan. Lys161 participates in a covalent cross-link: Glycyl lysine isopeptide (Lys-Gly) (interchain with G-Cter in ubiquitin). The helical transmembrane segment at 164–194 (EGGLYLAVTLLAGITGVVITLCLILIITSST) threads the bilayer. At 195 to 203 (KTIRRSYFE) the chain is on the cytoplasmic side. Residues Arg199 and Ser200 each coordinate FAD. The helical transmembrane segment at 204–222 (VFWYTHHLFVIFFIGLAIH) threads the bilayer. Residues Trp206, His209, His222, Arg226, and Ile227 each contribute to the heme b site. The Extracellular portion of the chain corresponds to 223–267 (GAERIVRGQTAESLAVHNITVCEQKISEWGKIKECPIPQFAGNPP). N-linked (GlcNAc...) asparagine glycosylation is present at Asn240. Lys255 is covalently cross-linked (Glycyl lysine isopeptide (Lys-Gly) (interchain with G-Cter in ubiquitin)). Residues Met268, Tyr280, and Arg287 each contribute to the heme b site. Residues 268 to 285 (MTWKWIVGPMFLYLCERL) traverse the membrane as a helical segment. The Cytoplasmic segment spans residues 286 to 570 (VRFWRSQQKV…VHFIFNKENF (285 aa)). One can recognise an FAD-binding FR-type domain in the interval 287–397 (RFWRSQQKVV…DGPFGTASED (111 aa)). Glycyl lysine isopeptide (Lys-Gly) (interchain with G-Cter in ubiquitin) cross-links involve residues Lys294, Lys299, Lys306, Lys328, and Lys334. FAD contacts are provided by Trp337, His338, Pro339, Thr341, His354, Arg356, Trp361, and Thr362. A Glycyl lysine isopeptide (Lys-Gly) (interchain with G-Cter in ubiquitin) cross-link involves residue Lys381. NADPH contacts are provided by Ile411, Arg446, and Thr481. Lys506 is covalently cross-linked (Glycyl lysine isopeptide (Lys-Gly) (interchain with G-Cter in ubiquitin)). Residue Arg513 participates in NADPH binding. Lys567 is covalently cross-linked (Glycyl lysine isopeptide (Lys-Gly) (interchain with G-Cter in ubiquitin)).

In terms of assembly, component of the phagocyte NADPH oxidase core complex/cytochrome b558 complex, composed of CYBB (heavy chain (beta)) and CYBA (light chain (alpha)). Component of the phagocyte NADPH oxidase complex composed of an obligatory core heterodimer formed by the membrane proteins CYBA and CYBB and the cytosolic regulatory subunits NCF1/p47-phox, NCF2/p67-phox, NCF4/p40-phox and the small GTPase RAC1 or RAC2. Interacts with NCF1 (phosphorylated form). Interacts with NCF2; the interaction is enhanced in the presence of GBP7. Interacts with RAC2. Interacts with RAC1. Interacts with calprotectin (S100A8/9). Interacts with NRROS; the interaction is direct and impairs formation of a stable NADPH oxidase complex. Interacts with CYBC1; CYBC1 may act as a chaperone stabilizing Cytochrome b-245 heterodimer. The CYBA-CYBB complex interacts with GBP7. FAD serves as cofactor. Glycosylated. Post-translationally, phosphorylated on Ser and Thr residues by PKC during neutrophils activation. Phosphorylation enhances the NADPH oxidase activity and stimulates its interaction with RAC2, NCF2/p67-phox, and NCF1/p47-phox. In terms of processing, undergoes 'Lys-48'-linked polyubiquitination, likely by RNF145, triggering endoplasmic reticulum-associated degradation. In terms of tissue distribution, detected in neutrophils (at protein level).

It is found in the cell membrane. It catalyses the reaction NADPH + 2 O2 = 2 superoxide + NADP(+) + H(+). Functionally, catalytic subunit of the phagocyte NADPH oxidase complex that mediates the transfer of electrons from cytosolic NADPH to O2 to produce the superoxide anion (O2(-)). In the activated complex, electrons are first transferred from NADPH to flavin adenine dinucleotide (FAD) and subsequently transferred via two heme molecules to molecular oxygen, producing superoxide through an outer-sphere reaction. Activation of the NADPH oxidase complex is initiated by the assembly of cytosolic subunits of the NADPH oxidase complex with the core NADPH oxidase complex to form a complex at the plasma membrane or phagosomal membrane. This activation process is initiated by phosphorylation dependent binding of the cytosolic NCF1/p47-phox subunit to the C-terminus of CYBA/p22-phox. NADPH oxidase complex assembly is impaired through interaction with NRROS. The protein is NADPH oxidase 2 of Homo sapiens (Human).